Consider the following 414-residue polypeptide: Patatin-like protein 1 (414 aa).

One can recognise a PNPLA domain in the interval 22–228 (LSLDGGGVRG…TANNPTLVAM (207 aa)). The GXGXXG motif lies at 26-31 (GGGVRG). Residues 64–68 (GTSTG) carry the GXSXG motif. Serine 66 acts as the Nucleophile in catalysis. The Proton acceptor role is filled by aspartate 215. The DGA/G motif lies at 215-217 (DGA). Serine 399 is modified (phosphoserine).

It belongs to the patatin family. Post-translationally, phosphorylated at Ser-399 by CPK3. Phosphorylation enhances PLP1 activity towards phosphatidylcholine. In terms of tissue distribution, expressed specifically in roots and root hairs.

The protein localises to the cytoplasm. Its function is as follows. Possesses non-specific lipolytic acyl hydrolase (LAH) activity. Catalyzes the hydrolysis of the neutral lipids monogalactosyldiacylglycerol (MGDG), digalactosyldiacylglycerol (DGDG) and phosphatidylglycerol (PG), and less efficiently the polar lipids phosphatidylcholine (PC) and phosphatidylinositol (PI), but not the storage lipid triacylglycerol (TAG). May play a role in root development. This Arabidopsis thaliana (Mouse-ear cress) protein is Patatin-like protein 1 (PLP1).